A 256-amino-acid polypeptide reads, in one-letter code: D-aminoacyl-tRNA deacylase (256 aa).

Belongs to the DtdA deacylase family. In terms of assembly, monomer. The cofactor is Zn(2+).

The enzyme catalyses a D-aminoacyl-tRNA + H2O = a tRNA + a D-alpha-amino acid + H(+). It carries out the reaction glycyl-tRNA(Ala) + H2O = tRNA(Ala) + glycine + H(+). Its function is as follows. D-aminoacyl-tRNA deacylase with broad substrate specificity. By recycling D-aminoacyl-tRNA to D-amino acids and free tRNA molecules, this enzyme counteracts the toxicity associated with the formation of D-aminoacyl-tRNA entities in vivo. This is D-aminoacyl-tRNA deacylase from Thermoplasma acidophilum (strain ATCC 25905 / DSM 1728 / JCM 9062 / NBRC 15155 / AMRC-C165).